The following is a 92-amino-acid chain: Small ribosomal subunit protein uS19 (92 aa).

This sequence belongs to the universal ribosomal protein uS19 family.

In terms of biological role, protein S19 forms a complex with S13 that binds strongly to the 16S ribosomal RNA. The protein is Small ribosomal subunit protein uS19 of Lactococcus lactis subsp. lactis (strain IL1403) (Streptococcus lactis).